Here is a 442-residue protein sequence, read N- to C-terminus: tRNA modification GTPase MnmE (442 aa).

Residues Arg-21, Glu-79, and Lys-118 each contribute to the (6S)-5-formyl-5,6,7,8-tetrahydrofolate site. Positions 214-367 (GFKIAIVGKP…LKEELQNYLN (154 aa)) constitute a TrmE-type G domain. Position 224 (Asn-224) interacts with K(+). GTP contacts are provided by residues 224 to 229 (NVGKSS), 243 to 249 (SDIAGTT), and 268 to 271 (DTAG). Ser-228 is a binding site for Mg(2+). The K(+) site is built by Ser-243, Ile-245, and Thr-248. Thr-249 contacts Mg(2+). Lys-442 contributes to the (6S)-5-formyl-5,6,7,8-tetrahydrofolate binding site.

This sequence belongs to the TRAFAC class TrmE-Era-EngA-EngB-Septin-like GTPase superfamily. TrmE GTPase family. Homodimer. Heterotetramer of two MnmE and two MnmG subunits. Requires K(+) as cofactor.

It is found in the cytoplasm. Its function is as follows. Exhibits a very high intrinsic GTPase hydrolysis rate. Involved in the addition of a carboxymethylaminomethyl (cmnm) group at the wobble position (U34) of certain tRNAs, forming tRNA-cmnm(5)s(2)U34. The chain is tRNA modification GTPase MnmE from Campylobacter jejuni subsp. jejuni serotype O:2 (strain ATCC 700819 / NCTC 11168).